A 1318-amino-acid polypeptide reads, in one-letter code: Maestro heat-like repeat family member 5 (1318 aa).

The interval Met1–Asp38 is disordered. The segment covering Cys12 to Asp38 has biased composition (polar residues). An HEAT 1 repeat occupies Asp581–His618. A disordered region spans residues Glu676–Asn695. HEAT repeat units lie at residues Gly769–Cys811, Pro840–Ala880, Arg996–Leu1033, Leu1037–Lys1074, Ser1076–Ala1113, Ser1118–Asp1155, Gln1164–Trp1200, and Val1278–Arg1315.

The sequence is that of Maestro heat-like repeat family member 5 (MROH5) from Homo sapiens (Human).